Reading from the N-terminus, the 585-residue chain is MLRTHTCGELTIKDVGKKVILAGWIDRIRDLGGVKFLMLRDRYGQTQIILSQNCQINLRRESVVQIEGVVQKRPEETINKDLLTGEIEVFAEKVNVFSSPEKDLPFYPGETKLPAEEIRLKYRYIDLRRKEVSDRIITRHKVTQCIRNYLSKNGFIEVETPFLTKSTPEGARDFLVPSRLKPGTFYALPQSPQLFKQLLMIGGIDRYFQVVRCFRDEDLRADRQPEFTQIDIEMSFNTMDDVLEITEGMIKHLFKEVLQVDLPGKLDRLTYNECMNKYGSDKPDRRIGMEFFDLSKHFKTCEYHAINAELSSGGVVKGFVVRDFANKMSRKLADELNEIAKSLGGGGILWFSFDSPESIKGAGAKYLQKNYNSVAKELSINYNDVCVLSAGKIDIVNTVLGEVRKILGERYFSDLRKGFDIFWVTDFPMFEYSEEENRFVAQHHPFTMPNLDDLKKYKNSDLSKIRAQSYDIVINGFEVGSGSIRIHDAELQREIFKLMRLTEEEVKLKFGFLLEAFQYGAPPHGGIALGLDRLTAIICGVPTIREVIAFPKTSSGICPLTGAPDVVNQKQLDELKIILGGDHCE.

Glutamate 169 contributes to the L-aspartate binding site. Residues 193 to 196 (QLFK) form an aspartate region. Position 215 (arginine 215) interacts with L-aspartate. ATP-binding positions include 215–217 (RDE) and glutamine 224. Position 443 (histidine 443) interacts with L-aspartate. Glutamate 478 is an ATP binding site. Arginine 485 is a binding site for L-aspartate. ATP is bound at residue 530-533 (GLDR).

Belongs to the class-II aminoacyl-tRNA synthetase family. Type 1 subfamily. In terms of assembly, homodimer.

It is found in the cytoplasm. The enzyme catalyses tRNA(Asp) + L-aspartate + ATP = L-aspartyl-tRNA(Asp) + AMP + diphosphate. Functionally, catalyzes the attachment of L-aspartate to tRNA(Asp) in a two-step reaction: L-aspartate is first activated by ATP to form Asp-AMP and then transferred to the acceptor end of tRNA(Asp). This Pseudothermotoga lettingae (strain ATCC BAA-301 / DSM 14385 / NBRC 107922 / TMO) (Thermotoga lettingae) protein is Aspartate--tRNA ligase.